Here is a 595-residue protein sequence, read N- to C-terminus: Elongation factor 4 (595 aa).

One can recognise a tr-type G domain in the interval 2 to 183 (KNIRNFCIIA…AIVEQVPAPA (182 aa)). GTP contacts are provided by residues 14 to 19 (DHGKST) and 130 to 133 (NKVD).

The protein belongs to the TRAFAC class translation factor GTPase superfamily. Classic translation factor GTPase family. LepA subfamily.

It is found in the cell inner membrane. The catalysed reaction is GTP + H2O = GDP + phosphate + H(+). Its function is as follows. Required for accurate and efficient protein synthesis under certain stress conditions. May act as a fidelity factor of the translation reaction, by catalyzing a one-codon backward translocation of tRNAs on improperly translocated ribosomes. Back-translocation proceeds from a post-translocation (POST) complex to a pre-translocation (PRE) complex, thus giving elongation factor G a second chance to translocate the tRNAs correctly. Binds to ribosomes in a GTP-dependent manner. The protein is Elongation factor 4 of Porphyromonas gingivalis (strain ATCC BAA-308 / W83).